We begin with the raw amino-acid sequence, 692 residues long: Catalase-B (692 aa).

Active-site residues include His69 and Asn142. Tyr356 contributes to the heme binding site.

Belongs to the catalase family. The cofactor is heme.

The protein localises to the cytoplasm. The enzyme catalyses 2 H2O2 = O2 + 2 H2O. In terms of biological role, occurs in almost all aerobically respiring organisms and serves to protect cells from the toxic effects of hydrogen peroxide. Its accumulation in prespore cells affords the spores protection from oxidation during prolonged dormancy. Required for normal developmental timing, possibly through a regulatory role in differentiation and morphogenesis. In Dictyostelium discoideum (Social amoeba), this protein is Catalase-B (catB).